Consider the following 704-residue polypeptide: Eukaryotic translation initiation factor 2-alpha kinase 1 (704 aa).

Residues 224 to 667 (FEELELLGKG…LTSNLFHDLV (444 aa)) form the Protein kinase domain. Residues 230-238 (LGKGGYGSV) and Lys-253 contribute to the ATP site. Asp-491 serves as the catalytic Proton acceptor.

It belongs to the protein kinase superfamily. Ser/Thr protein kinase family. GCN2 subfamily. In terms of processing, autophosphorylated.

It carries out the reaction L-seryl-[protein] + ATP = O-phospho-L-seryl-[protein] + ADP + H(+). It catalyses the reaction L-threonyl-[protein] + ATP = O-phospho-L-threonyl-[protein] + ADP + H(+). Functionally, mediates down-regulation of protein synthesis in response to stress conditions by the phosphorylation of the alpha subunit of eIF-2 (tif211) on 'Ser-52'. Protein synthesis is inhibited at the level of initiation. Activity is inhibited in the presence of heme. This Schizosaccharomyces pombe (strain 972 / ATCC 24843) (Fission yeast) protein is Eukaryotic translation initiation factor 2-alpha kinase 1 (hri1).